The primary structure comprises 325 residues: Solute carrier family 35 member B1 (325 aa).

8 helical membrane-spanning segments follow: residues 18-38, 54-74, 88-108, 139-159, 171-191, 213-233, 246-266, and 288-308; these read PVCF…QESI, FALS…KLLI, WLYA…NSAL, YPLA…LFMY, IFGY…LTGV, LWST…WEFL, ILLF…TVVY, and VILF…LVFL. The short motif at 321–325 is the Di-lysine motif element; that stretch reads KKTSH.

The protein belongs to the nucleotide-sugar transporter family. SLC35B subfamily.

It is found in the endoplasmic reticulum membrane. Functionally, probable sugar transporter. This is Solute carrier family 35 member B1 (SLC35B1) from Gallus gallus (Chicken).